An 81-amino-acid polypeptide reads, in one-letter code: Dermaseptin-S6 (81 aa).

An N-terminal signal peptide occupies residues methionine 1 to serine 22. A disordered region spans residues serine 22–serine 49. Positions glutamate 23 to arginine 45 are excised as a propeptide. Positions glutamate 30–serine 41 are enriched in acidic residues. At isoleucine 78 the chain carries Isoleucine amide. Residues glutamate 80–glutamine 81 constitute a propeptide that is removed on maturation.

Belongs to the frog skin active peptide (FSAP) family. Dermaseptin subfamily. Expressed by the skin glands.

It is found in the secreted. Its function is as follows. Antimicrobial peptide. This is Dermaseptin-S6 from Phyllomedusa sauvagei (Sauvage's leaf frog).